A 458-amino-acid chain; its full sequence is MVNVLVVGDLMIDHYVWGSCDRISPEAPVQVVNIKNETKRLGGLGNVVSNLKTLGSEVGVISVVGDDDVGDEILELLKDRGAKTELIIKEKGRKSSQKSRIMVAHQQVLRLDTESVCEIGVSDDIISKFENILSGYDIVLLSDYGKGVLSPYLTKEIIRITKKSGKMVLIDPKGKDYSKYSGATLLTPNKKEASEALGFGINDEDDLKHALKMLKDKFKLNYSLITLSEDGIALLDEDVKKFPALAKEVFDVTGAGDSVLATLGYCLASKMSLEESIEIANLAAAVVVGKVGSADASWGEIENLKSKKSGFERKIISLDELLRVDRSGKTMVFTNGCFDILHFGHISYLQSAKKIGDMLVVGLNSDRSVKELKGDNRPVNAQSDRASMLAALEFVDFVVIFDEDTPLNLIKTLKPDILVKGADYTGKKVVGSEFVREVKLIDFVDGKSTTNIINKIKG.

The tract at residues 1–311 (MVNVLVVGDL…ENLKSKKSGF (311 aa)) is ribokinase. 189–192 (NKKE) contacts ATP. Asp-257 is a catalytic residue. Residues 333–458 (FTNGCFDILH…TTNIINKIKG (126 aa)) are cytidylyltransferase.

This sequence in the N-terminal section; belongs to the carbohydrate kinase PfkB family. It in the C-terminal section; belongs to the cytidylyltransferase family. As to quaternary structure, homodimer.

The enzyme catalyses D-glycero-beta-D-manno-heptose 7-phosphate + ATP = D-glycero-beta-D-manno-heptose 1,7-bisphosphate + ADP + H(+). It carries out the reaction D-glycero-beta-D-manno-heptose 1-phosphate + ATP + H(+) = ADP-D-glycero-beta-D-manno-heptose + diphosphate. The protein operates within nucleotide-sugar biosynthesis; ADP-L-glycero-beta-D-manno-heptose biosynthesis; ADP-L-glycero-beta-D-manno-heptose from D-glycero-beta-D-manno-heptose 7-phosphate: step 1/4. It functions in the pathway nucleotide-sugar biosynthesis; ADP-L-glycero-beta-D-manno-heptose biosynthesis; ADP-L-glycero-beta-D-manno-heptose from D-glycero-beta-D-manno-heptose 7-phosphate: step 3/4. Catalyzes the phosphorylation of D-glycero-D-manno-heptose 7-phosphate at the C-1 position to selectively form D-glycero-beta-D-manno-heptose-1,7-bisphosphate. In terms of biological role, catalyzes the ADP transfer from ATP to D-glycero-beta-D-manno-heptose 1-phosphate, yielding ADP-D-glycero-beta-D-manno-heptose. This chain is Bifunctional protein HldE, found in Campylobacter fetus subsp. fetus (strain 82-40).